An 813-amino-acid polypeptide reads, in one-letter code: MTDLFASGDNSSNSFDDSNDEIARKNETAFKYTTIFHTNLSEKLYHELCALAFGEFDIPQGQISPLMWTRLHEIYSEVEMQTRKLPAGSNYSASSQKYANEAVQIASVLSIYTALAHEYDETVEVSLLSKLVVEDVEFRRIYALLLWSEKAISEQQYEKGLGDKVRKLEGIKSSRINSMMALKRPTFGAANAPKDASLDPDAPGTKEDQALEQMAMNVFFQLIRSGETSKAANLAIDLGMGAIGAQLQLHSMLRNPLDIPLEASKQNFGEYKRSRRAKYYQMTQKLIEQSQGSEDDAYWMLISAIRGNIQPMLKAGKSVIEKVWAYANSAVLARILAAEGAMTQETISTLFNVPLTSKSILDELRSEADRTKEVYILLRVIDDMLNDDIEDLYKFANETVGEFVPNDKNCQVNMLALDIFFHLVAVSYASGFEPNDDGNAVIILGFDDLRARSGTSSHKKMAAFYSRFLPEDMKLPEIVETMKAVDSDEEREILAESLKQSDIDFGRCACTLIEQIRKDDKTKVVTLEEQIDHWHWLLIGGEETALAALEECNRLVRKVMLSTPIDESVIRQIIRKALHFEVPKLLSQAVENEATVLSLITDGTLFEQKPGSQLAINKIEHAALEFYGLCSFVDVNNFMITIALKLGLMFKYTPITDDELSMIGGVKRLDNTTAADWEASLRVRARAEQTLREEVLKKRAAEHNTRVGMVQQHLDTVLPMLRGLVNNIGVRPEYFLSPRANGDPMRVHRKEIQEIRNLFLPQFFILLAQAAVRLDDTTNFNDFFTSFNNDLGLDQEWMVFIKAFYAELNLKVE.

It belongs to the nucleoporin Nup84/Nup107 family. In terms of assembly, part of the nuclear pore complex (NPC). May interact with mdf-1.

It is found in the nucleus. The protein localises to the nuclear pore complex. Its subcellular location is the chromosome. It localises to the centromere. The protein resides in the kinetochore. It is found in the nucleus membrane. Involved in kinetochore assembly and chromosome segregation during embryonic mitosis. Required for the localization of the NDC80 complex member him-10, the chromosomal passenger complex component air-2 and nuclear pore complex proteins npp-23 and npp-15 to kinetochores during metaphase. Required for npp-23 localization to the nuclear envelope during interphase. Recruits mdf-1, a component of the spindle assembly checkpoint, to the nuclear envelope. Appears dispensable for the assembly of the nuclear pore complex and for nuclear protein import. The protein is Nuclear pore complex protein 5 of Caenorhabditis elegans.